The chain runs to 2464 residues: MTAPWPVKHDPIALVGIGCHMPGGVRDIPALWEFLRKQKDVHREFDEPRFSAKGFSHSNPDRPGTAVARSGFLLDEDPRLFDAAFFGITDNEVETMDASQRKLLEVTYEAFENAGETWEGVSGSRVGVFVGDISFDNYVSQTRDWDYGGKYSATGAFPNMLANRIHYVFNLKGPSLLVNSACTSAMYALHLAMNSIRNGDCESAIVAGSNWIMDPNCHIAMGKLGALSATSRSHTFDASADGYARGEGFAALYLKKTSLAIEDGSPIRALIMGSAINANGRTNGITNPSGPAQEIVIREAYKNAGNLDPSQTTFLECHGTGTRVGDPTEIKAAGNVFGPSRAFEQNDQLVVGSVKTNLGHLEGACALPGILKVVAALEQGEIPPTLGFQTPNPRIDFKQAKARVSTQVEPWPKDKLKRASVTSAGFGGTNGHCIIDHVHNLLPSYVKPGIVGQRVEQLNGQNGINGTNGTNGTNGTNGTNGTNGTNGHHNPKTEAPKLVRKADAGTRKLVVFPFSAHNQTSLVANVDSLNEVIHQHSLADVAYTLSARRSRFMHRTYCIADKDQVPETGLKQENKLEIVSSPQRVSAGFIFTGQGAQWHAMGAGLLQYSVFQNVILYLDSVLSILPEPPSWRIADFIVGNCDTDSIQIPAVSQTVCTAVQIGLVDLLASWSVRPAGVAGHSSGEIAAAYASGRITAAEAIVAAYYRGYMVSFNNQRGAMLAVGFGPEKAMEYIREAGLEERLKVAAINSFDSVTISGDADSVEDLSARLSKESVFNRLLRTGGLAYHSHHMLPFGSAYEEKVNDGLRHIKSLGVDTTSAKYPFIPWTSSVIPDKSTTEVTASYWRANLESPVRFTDAVSNLLSLPGLNIGALIEIGPHPALKGPLGQTMKSLGKVIPHIASLKRNEDAQRLMLDCAGTLFALNVPVNLVAVNAIDGQGPKGEHHLEYGCTAIDLPRYKYTYGPIKYHESRLSKEYRLRPTPRHDLLGSKVPGTTKLRPQWRNMLRLKDLGWLNDHRVPPHVLHPGAAHIVMAMVAAEHKYNEFPDALPIIGLTMRNVSIKKTLVVPEDDHGVEIVLSMELEDGATAKSPGWASFSIASVVRDSDQWTEHCSGQIKIEVSTFEQATPISTTMDGRLVDAQTWYTRFADMGLQFGPSFQGYSDIRADPAKNIASARLALNTTAGMFPGGESTYPIHPASLDLVIRLGLMACNGGQAETASVQLPIHFNQMKFNYGHLEGRDWATGVSRGELRGLRGAYAQLQMLDEEGKVMLDIDNMRFTSLNNEQESTSTGDRACKAYSSPFARLVWRPDIRTLSKDQFNEALKCCQENVGEFPQLCKIFDLAGHANPDLRVLELGASSNAGAGKAVLKTLVGSNNIKRYREYVATDTTEERLESVRESTAEFRDVKYSVLDINEVPSEQGFQSGLYDIIICSDGPQTLQAMQHLRKLVTPAGRLVQVSRTGREITSESLRNVDFELVGEVTEPAHHSTITVHALRVTERHQIHSNRLVHLLHGDQGAPELLHRLAQVLGDLGIAIKVSSLDDTQSVVAPNSHVVAFLDGDNLLFAASQHRIGLFQHLAANTASMMWLTSCGLVKGRNPDGSFVSGLLRTLAAENPAGQFLSVDIDAKDFRVQDTEMDTLVRSLVDVVLSLQQTSEDSHDIVVNHDLAWQDGNMWVSRLVPDAELQGYDQTTMDDQNMKAVPLSTLGPVRAAFRTPGILTSLYFKPYTELWETLPHDWIEIKLEAVGLNWKDLGLCSGRFDQNNLSNEYVGVVSDMGSSVHDLSIGDRVYGMGKGHFGNYTRVPAVLAQKLEAGVDSLEAATMPLVYMTAVYAFEHITRVRKGSKVLIQSASGGLGLAATQLALSKGADVYVTVGTADKAQFLSDVMGISSDHIFSSRRLTDVPRMISATKNGGFDVILSTSQGDMLYESIKALAPLGHLIDVGRMDVTSAKTVALELFHKSASFTSFDLGLVIERDVELGGDLMFAVNQHFRAGRIGPIRPYHVSDISQLDQALLKLSKGTHIGKMVISYQNPSSLLSVHQSVTHARFLQEANYILVGGMSPLGRCIIRWMVSRGAQHLSVWSRRGGNNLSPEAAALIDEMTSQGVRIQLVTCDVSNREQVLRSMQEANSERAVRGVFNYAVSYQDISFDKMTADMFCQGMAAKVFGTKNLHEATANLPLDFFTMTSSLGTVYAFPTQSTYLAANNFLDYFARYRRQSGLPATTVSLGFINDLGALTQDEVTVNLFARTKGQTVTGSQVLRALEPAFVKHLNTKDQWLGRWEDPLSAANIFTGIDPAVLANMKRAEGKGSASGTVPRWYHDPRVSLMLRAMDDAWRHGNGEDSDKATFGFDDADQSPAVQLRRHFEASIKKTRNGQDKEEVAETVTFVTDAIRTTVAGMLFIDPSVVKENHTVVDHGIDSLLAAEFRTWLNSSFGKNISMLKLMDARSSIGSIAQVIVEEAIGA.

The Ketosynthase family 3 (KS3) domain occupies 9–437 (HDPIALVGIG…GTNGHCIIDH (429 aa)). Residues Cys182, His318, and His360 each act as for beta-ketoacyl synthase activity in the active site. A compositionally biased stretch (low complexity) spans 461–487 (QNGINGTNGTNGTNGTNGTNGTNGTNG). Residues 461–495 (QNGINGTNGTNGTNGTNGTNGTNGTNGHHNPKTEA) form a disordered region. The 323-residue stretch at 589-911 (FIFTGQGAQW…LKRNEDAQRL (323 aa)) folds into the Malonyl-CoA:ACP transacylase (MAT) domain. The interval 983–1121 (HDLLGSKVPG…GQIKIEVSTF (139 aa)) is N-terminal hotdog fold. Residues 983 to 1286 (HDLLGSKVPG…FTSLNNEQES (304 aa)) form the PKS/mFAS DH domain. His1015 functions as the Proton acceptor; for dehydratase activity in the catalytic mechanism. The tract at residues 1133 to 1286 (GRLVDAQTWY…FTSLNNEQES (154 aa)) is C-terminal hotdog fold. Residue Asp1199 is the Proton donor; for dehydratase activity of the active site. The segment at 1282-1490 (NEQESTSTGD…TEPAHHSTIT (209 aa)) is methyltransferase (CMeT) domain. Positions 1716 to 2028 (GILTSLYFKP…KGTHIGKMVI (313 aa)) constitute an Enoyl reductase (ER) domain. The 180-residue stretch at 2052–2231 (ANYILVGGMS…ATTVSLGFIN (180 aa)) folds into the Ketoreductase (KR) domain. Residues 2383–2461 (ETVTFVTDAI…SIAQVIVEEA (79 aa)) form the Carrier domain. Residue Ser2420 is modified to O-(pantetheine 4'-phosphoryl)serine.

Pantetheine 4'-phosphate serves as cofactor.

The protein operates within secondary metabolite biosynthesis. Functionally, highly reducing polyketide synthase; part of the gene cluster that mediates the biosynthesis of the 6-methyl-2-pyrone derivative xylariolide D. XilA produces the 5-alkyl-6-methyl-2-pyrone backbone called prexylariolide D via sequential condensations of 4 malonyl-CoA units with one acetyl-CoA starter unit. During the biosynthesis, the linear polyketide chain is branched by the addition of an acetyl unit as the origin of the methyl group at the 2-pyrone ring. Prexylariolide D is then hydroxylated at the side chain by xilC to form the final product, xylariolide D. The chain is Highly reducing polyketide synthase xilA from Penicillium rubens (strain ATCC 28089 / DSM 1075 / NRRL 1951 / Wisconsin 54-1255) (Penicillium chrysogenum).